Reading from the N-terminus, the 273-residue chain is Glutamate racemase (273 aa).

Substrate contacts are provided by residues 9–10 and 41–42; these read DS and YG. The active-site Proton donor/acceptor is the Cys73. 74-75 contacts substrate; sequence NT. The active-site Proton donor/acceptor is the Cys183. 184-185 is a binding site for substrate; that stretch reads TH.

The protein belongs to the aspartate/glutamate racemases family.

The enzyme catalyses L-glutamate = D-glutamate. The protein operates within cell wall biogenesis; peptidoglycan biosynthesis. Functionally, provides the (R)-glutamate required for cell wall biosynthesis. In Shewanella oneidensis (strain ATCC 700550 / JCM 31522 / CIP 106686 / LMG 19005 / NCIMB 14063 / MR-1), this protein is Glutamate racemase.